The primary structure comprises 264 residues: Glucosamine-6-phosphate deaminase (264 aa).

D72 acts as the Proton acceptor; for enolization step in catalysis. The For ring-opening step role is filled by D141. H143 acts as the Proton acceptor; for ring-opening step in catalysis. The active-site For ring-opening step is E148.

This sequence belongs to the glucosamine/galactosamine-6-phosphate isomerase family. NagB subfamily. As to quaternary structure, homohexamer.

The enzyme catalyses alpha-D-glucosamine 6-phosphate + H2O = beta-D-fructose 6-phosphate + NH4(+). Its pathway is amino-sugar metabolism; N-acetylneuraminate degradation; D-fructose 6-phosphate from N-acetylneuraminate: step 5/5. Its activity is regulated as follows. Allosterically activated by N-acetylglucosamine 6-phosphate (GlcNAc6P). Catalyzes the reversible isomerization-deamination of glucosamine 6-phosphate (GlcN6P) to form fructose 6-phosphate (Fru6P) and ammonium ion. The chain is Glucosamine-6-phosphate deaminase from Glaesserella parasuis serovar 5 (strain SH0165) (Haemophilus parasuis).